The sequence spans 525 residues: MSQEQYTENLKVIVAEKLAGIPNFNEDIKYVAEYIVLLIVNGGTVESVVDELASLFDSVSRDTLANVVQTAFFALEALQQGESAENIVSKIRMMNAQSLGQSDIAQQQQQQQQQQQPDIAQQQPQQQPQQQPQQQPQQQPQQQPQQQPQQQPQQQPQLQPLQPQLGTQNAMQTDAPATPSPISAFSGVVNAAAPPQFAPVDNSQRFTQRGGGAVGKNRRGGRGGNRGGRNNNSTRFNPLAKALGMAGESNMNFTPTKKEGRCRLFPHCPLGRSCPHAHPTKVCNEYPNCPKPPGTCEFLHPNEDEELMKEMERTREEFQKRKADLLAAKRKPVQTGIVLCKFGALCSNPSCPFGHPTPANEDAKVIDLMWCDKNLTCDNPECRKAHSSLSKIKEVKPISQKKAAPPPVEKSLEQCKFGTHCTNKRCKYRHARSHIMCREGANCTRIDCLFGHPINEDCRFGVNCKNIYCLFRHPPGRVLPEKKGAAPNSNVPTNERPFALPENAIIENAPPQTSFTHQEQDTEMN.

Disordered regions lie at residues 102-160 (SDIA…QLQP) and 196-236 (QFAP…STRF). Over residues 103-160 (DIAQQQQQQQQQQQPDIAQQQPQQQPQQQPQQQPQQQPQQQPQQQPQQQPQQQPQLQP) the composition is skewed to low complexity. A run of 9 repeats spans residues 121 to 124 (QQQP), 125 to 128 (QQQP), 129 to 132 (QQQP), 133 to 136 (QQQP), 137 to 140 (QQQP), 141 to 144 (QQQP), 145 to 148 (QQQP), 149 to 152 (QQQP), and 153 to 156 (QQQP). The 10 X 4 AA tandem repeats of Q-Q-Q-P stretch occupies residues 121-156 (QQQPQQQPQQQPQQQPQQQPQQQPQQQPQQQPQQQP). The 10; approximate repeat unit spans residues 157-160 (QLQP). Omega-N-methylarginine is present on residues Arg209 and Arg222. Residues 209-228 (RGGGAVGKNRRGGRGGNRGG) form an RNA-binding RGG-box region. Residues 209-239 (RGGGAVGKNRRGGRGGNRGGRNNNSTRFNPL) are PY-NLS nuclear localization signal. At Thr254 the chain carries Phosphothreonine. 7 C3H1-type zinc fingers span residues 262–278 (CRLFPHCPLGRSCPHAH), 283–300 (CNEYPNCPKPPGTCEFLH), 340–355 (CKFGALCSNPSCPFGH), 371–386 (CDKNLTCDNPECRKAH), 415–430 (CKFGTHCTNKRCKYRH), 437–452 (CREGANCTRIDCLFGH), and 458–473 (CRFGVNCKNIYCLFRH). Positions 503–525 (NAIIENAPPQTSFTHQEQDTEMN) are disordered. Positions 510 to 525 (PPQTSFTHQEQDTEMN) are enriched in polar residues.

Belongs to the ZC3H14 family. Interacts with MLP1. Interacts with PUB1. Methylated by HMT1.

Its subcellular location is the nucleus. It is found in the cytoplasm. Functionally, RNA-binding protein involved in RNA processing and transcription regulation. Acts as a regulator of mRNA stability: binds the poly(A) tail of mRNAs and pre-mRNAs, preventing their degradation by the exosome. Involved in the biogenesis of circular RNAs (circRNAs) which are produced by back-splicing circularization of pre-mRNAs. Involved in mRNA poly(A) tail length control and nuclear export. Functions in surveillance and the packaging leading to generation of export-competent mRNPs. Controls both mRNP compaction that facilitates movement through nuclear pore complexes and the length of transcript poly(A) tails. Also acts as a regulator of transcription. Associates directly with nascent RNA polymerase II transcripts and remains associated during subsequent nuclear RNA processing reactions. Required for RNA polymerase III (RNAPIII) transcription: required for the occupancy of RNAPIII and Transcription factor IIIB (TFIIIB) at target genes, possibly via direct association with nascent RNAPIII transcripts. This is Nuclear polyadenylated RNA-binding protein NAB2 from Saccharomyces cerevisiae (strain ATCC 204508 / S288c) (Baker's yeast).